The chain runs to 970 residues: Protein translocase subunit SecA (970 aa).

Residues Gln99, 117–121, and Asp631 each bind ATP; that span reads GEGKT.

It belongs to the SecA family. As to quaternary structure, monomer and homodimer. Part of the essential Sec protein translocation apparatus which comprises SecA, SecYEG and auxiliary proteins SecDF. Other proteins may also be involved.

It is found in the cell inner membrane. Its subcellular location is the cytoplasm. It carries out the reaction ATP + H2O + cellular proteinSide 1 = ADP + phosphate + cellular proteinSide 2.. Its function is as follows. Part of the Sec protein translocase complex. Interacts with the SecYEG preprotein conducting channel. Has a central role in coupling the hydrolysis of ATP to the transfer of proteins into and across the cell membrane, serving as an ATP-driven molecular motor driving the stepwise translocation of polypeptide chains across the membrane. The protein is Protein translocase subunit SecA of Chlamydia pneumoniae (Chlamydophila pneumoniae).